The chain runs to 281 residues: sn-glycerol-3-phosphate transport system permease protein UgpE (281 aa).

6 helical membrane passes run 16 to 36, 85 to 105, 113 to 133, 142 to 162, 202 to 222, and 247 to 267; these read LILGIAVILFPLYVAFVAATL, FSITLGKITVSMLSAFAIVWF, FFWMIFITLMLPVEVRIFPTV, LDSYAGLTLPLMASATATFLF, ALFVITFIYGWNQYLWPLLII, and WNSVMAAMLLTLIPPVVIVLV. In terms of domain architecture, ABC transmembrane type-1 spans 77–268; sequence LLNSFVMAFS…IPPVVIVLVM (192 aa).

This sequence belongs to the binding-protein-dependent transport system permease family. UgpAE subfamily. As to quaternary structure, the complex is composed of two ATP-binding proteins (UgpC), two transmembrane proteins (UgpA and UgpE) and a solute-binding protein (UgpB).

The protein localises to the cell inner membrane. Its function is as follows. Part of the ABC transporter complex UgpBAEC involved in sn-glycerol-3-phosphate (G3P) import. Probably responsible for the translocation of the substrate across the membrane. The sequence is that of sn-glycerol-3-phosphate transport system permease protein UgpE (ugpE) from Escherichia coli O6:K15:H31 (strain 536 / UPEC).